The chain runs to 170 residues: MKEEKKLLLQEVEEKISASQGFILLRYLGFTAAHSREFRNSLSGVSAEFEVLKKRIFFKAIQSAGFDIDSSDTSGHLGVVFAYDDAVSAAKQVLDFNKQHNDSLVFLAGRIDSANLSGKEVEAVAKLPSMKELRQQIVGLIAAPMSQVVGIMGSALSGVVSCIDQKIQKN.

This sequence belongs to the universal ribosomal protein uL10 family. Part of the ribosomal stalk of the 50S ribosomal subunit. The N-terminus interacts with L11 and the large rRNA to form the base of the stalk. The C-terminus forms an elongated spine to which L12 dimers bind in a sequential fashion forming a multimeric L10(L12)X complex.

Functionally, forms part of the ribosomal stalk, playing a central role in the interaction of the ribosome with GTP-bound translation factors. The protein is Large ribosomal subunit protein uL10 of Chlamydia felis (strain Fe/C-56) (Chlamydophila felis).